The primary structure comprises 443 residues: Xaa-Pro dipeptidase (443 aa).

Mn(2+) is bound by residues aspartate 246, aspartate 257, histidine 339, glutamate 384, and glutamate 423.

Belongs to the peptidase M24B family. Bacterial-type prolidase subfamily. Mn(2+) serves as cofactor.

The catalysed reaction is Xaa-L-Pro dipeptide + H2O = an L-alpha-amino acid + L-proline. Its function is as follows. Splits dipeptides with a prolyl residue in the C-terminal position. In Shigella boydii serotype 18 (strain CDC 3083-94 / BS512), this protein is Xaa-Pro dipeptidase.